The chain runs to 854 residues: MGVRGLTSYIAQRAEIYLKPHELHSTALVIDGDNLSCNLYKDVTGSYSAFGGDYDDFYRAVVQFFQVLAECNIRPYVLMDGGYEERKLRTVSTRLRNKISVIKKINPNASITLFPLHLKEVFVDAVRDCGVPVMRCVFEADDELAALARKLNCPVLSYDSDFYIHNVKYIPLITLTVKVLTKQVKDKNSSNQKDSRDLRHCEAKNVKKRTRANKIVTGIQTTGLTASTKGSSKTYKYLDCCIYRVSHLCGRGTLSPEKLPLFAALLGNDYIARSAFKNFFAAGMGKAGRSRKLKLQQKRIQVILTWLKEETAESALAKVLSRLKKNQRDSLVSQVNAAISGYSNELCHAYDYFDEHYENAFPYIEPVSEEECSDDEHSSSSDEKFSDVEEGEDQEEADNQDEEQQEENQDVDSGDEEEEEADEGLELEVEDKTLLFPQWFLDKLYPAHLPRSFVDLMHLRKYINNPQIEHFPFHDSNEVALPILNYVFALLHHVECEKIELPLEVDMDIEGSTVPYLTYLTRALRVTNVRYFKMPIEKKPAYPFDPLSPDARHLRAVFEDNAPNADTEKLFSKLDQLPEDLRLYFLAIIYWLHRSEHCDLLHLHSLILSLVVLRTIDVTIPAEREVKTFLKRFGKTLKAERAVRDKEAAEGIKRGIKPALLELSVPDRMAHVPKSDCYLTQERLLPHFHMQEIFKKKFDLYSTTVIHAFAEFQAVVYQLNGLNSLLDFPLLSPRMNQLYCGAFLYNMYDVLRNRADVRYHVENFLLPDSKLMFDFYCYLYDWCAEFIPTWKRLEVDPTAAKALQKKRLKKQRQAARKVELREAIADPNAEMVEDADPENDFFDLNNKFCALKVA.

The interval 368-427 is disordered; it reads SEEECSDDEHSSSSDEKFSDVEEGEDQEEADNQDEEQQEENQDVDSGDEEEEEADEGLEL. Basic and acidic residues predominate over residues 375–387; that stretch reads DEHSSSSDEKFSD. Residues 388–427 show a composition bias toward acidic residues; that stretch reads VEEGEDQEEADNQDEEQQEENQDVDSGDEEEEEADEGLEL.

It belongs to the asteroid family. Expressed in the proliferative tissues of embryos and in the mitotically active tissue anterior to the morphogenetic furrow in eye imaginal disks.

Its function is as follows. May function in EGF receptor signaling. May play a role in compound eye morphogenesis. The sequence is that of Protein asteroid (ast) from Drosophila melanogaster (Fruit fly).